The primary structure comprises 159 residues: Putative 4-hydroxy-4-methyl-2-oxoglutarate aldolase (159 aa).

Substrate contacts are provided by residues 74 to 77 (GDNL) and R96. D97 contacts a divalent metal cation.

Belongs to the class II aldolase/RraA-like family. Homotrimer. A divalent metal cation serves as cofactor.

The enzyme catalyses 4-hydroxy-4-methyl-2-oxoglutarate = 2 pyruvate. It carries out the reaction oxaloacetate + H(+) = pyruvate + CO2. Functionally, catalyzes the aldol cleavage of 4-hydroxy-4-methyl-2-oxoglutarate (HMG) into 2 molecules of pyruvate. Also contains a secondary oxaloacetate (OAA) decarboxylase activity due to the common pyruvate enolate transition state formed following C-C bond cleavage in the retro-aldol and decarboxylation reactions. The chain is Putative 4-hydroxy-4-methyl-2-oxoglutarate aldolase from Bacillus anthracis.